The sequence spans 244 residues: UPF0280 protein Mhun_0136 (244 aa).

The protein belongs to the UPF0280 family.

This Methanospirillum hungatei JF-1 (strain ATCC 27890 / DSM 864 / NBRC 100397 / JF-1) protein is UPF0280 protein Mhun_0136.